Consider the following 377-residue polypeptide: Cobalt-precorrin-5B C(1)-methyltransferase (377 aa).

The disordered stretch occupies residues 1-21 (MNPVRQPYDLAAPAPNGMRRG).

The protein belongs to the CbiD family.

It catalyses the reaction Co-precorrin-5B + S-adenosyl-L-methionine = Co-precorrin-6A + S-adenosyl-L-homocysteine. It functions in the pathway cofactor biosynthesis; adenosylcobalamin biosynthesis; cob(II)yrinate a,c-diamide from sirohydrochlorin (anaerobic route): step 6/10. Catalyzes the methylation of C-1 in cobalt-precorrin-5B to form cobalt-precorrin-6A. This is Cobalt-precorrin-5B C(1)-methyltransferase from Chromobacterium violaceum (strain ATCC 12472 / DSM 30191 / JCM 1249 / CCUG 213 / NBRC 12614 / NCIMB 9131 / NCTC 9757 / MK).